The primary structure comprises 355 residues: Serum paraoxonase/arylesterase 1 (355 aa).

Cys-42 and Cys-353 are disulfide-bonded. Residues Glu-53 and Asp-54 each contribute to the Ca(2+) site. His-115 acts as the Proton acceptor in catalysis. Ca(2+)-binding residues include Ile-117, Asn-168, Asp-169, and Asn-224. Residue Asn-253 is glycosylated (N-linked (GlcNAc...) asparagine). Residues Asp-269 and Asn-270 each coordinate Ca(2+). Residues Asn-270 and Asn-324 are each glycosylated (N-linked (GlcNAc...) asparagine).

Belongs to the paraoxonase family. Homodimer. Interacts with CLU. Ca(2+) serves as cofactor. Glycosylated. In terms of processing, the signal sequence is not cleaved. Plasma. Associated with HDL.

It localises to the secreted. The protein localises to the extracellular space. It carries out the reaction a phenyl acetate + H2O = a phenol + acetate + H(+). The enzyme catalyses An aryl dialkyl phosphate + H2O = dialkyl phosphate + an aryl alcohol.. It catalyses the reaction an N-acyl-L-homoserine lactone + H2O = an N-acyl-L-homoserine + H(+). Hydrolyzes the toxic metabolites of a variety of organophosphorus insecticides. Capable of hydrolyzing a broad spectrum of organophosphate substrates and lactones, and a number of aromatic carboxylic acid esters. Mediates an enzymatic protection of low density lipoproteins against oxidative modification. This chain is Serum paraoxonase/arylesterase 1 (Pon1), found in Rattus norvegicus (Rat).